An 87-amino-acid chain; its full sequence is MDLPSHSINAMKSMEVIDINTGTKLGLIKDLKIDTEEYKVISIILPGSKVGGWFSKGNDIEIDWTDIQKIGVDVILVNGDNLFVNKD.

This sequence belongs to the YlmC/YmxH family.

This is an uncharacterized protein from Clostridium acetobutylicum (strain ATCC 824 / DSM 792 / JCM 1419 / IAM 19013 / LMG 5710 / NBRC 13948 / NRRL B-527 / VKM B-1787 / 2291 / W).